Consider the following 512-residue polypeptide: Histidine ammonia-lyase (512 aa).

Positions 144–146 form a cross-link, 5-imidazolinone (Ala-Gly); it reads ASG. The residue at position 145 (Ser145) is a 2,3-didehydroalanine (Ser).

This sequence belongs to the PAL/histidase family. Contains an active site 4-methylidene-imidazol-5-one (MIO), which is formed autocatalytically by cyclization and dehydration of residues Ala-Ser-Gly.

It localises to the cytoplasm. It catalyses the reaction L-histidine = trans-urocanate + NH4(+). The protein operates within amino-acid degradation; L-histidine degradation into L-glutamate; N-formimidoyl-L-glutamate from L-histidine: step 1/3. In Desulfotalea psychrophila (strain LSv54 / DSM 12343), this protein is Histidine ammonia-lyase.